Here is a 339-residue protein sequence, read N- to C-terminus: Serine racemase (339 aa).

Residues Ser-43 and Lys-63 each coordinate ATP. Residue Lys-68 is the Proton acceptor of the active site. Position 68 is an N6-(pyridoxal phosphate)lysine (Lys-68). Position 90 (Thr-90) interacts with Ca(2+). The active-site Proton acceptor is the Ser-93. Asn-95 is a pyridoxal 5'-phosphate binding site. Cys-122 is modified (S-nitrosocysteine). Tyr-130 is an ATP binding site. A Mg(2+)-binding site is contributed by Asp-187. Pyridoxal 5'-phosphate-binding residues include Gly-195, Gly-196, and Gly-197. Glu-219, Ala-223, and Asp-225 together coordinate Ca(2+). Positions 219, 223, and 225 each coordinate Mg(2+). Residues Glu-219, Ala-223, and Asp-225 each contribute to the Mn(2+) site. Lys-287 contacts ATP. Ser-323 serves as a coordination point for pyridoxal 5'-phosphate. Asn-326 is an ATP binding site.

It belongs to the serine/threonine dehydratase family. Mg(2+) serves as cofactor. Requires Mn(2+) as cofactor. The cofactor is Ca(2+). Pyridoxal 5'-phosphate is required as a cofactor.

The enzyme catalyses L-serine = D-serine. It carries out the reaction L-serine = pyruvate + NH4(+). It catalyses the reaction D-serine = pyruvate + NH4(+). Catalyzes the synthesis of D-serine from L-serine. Has dehydratase activity towards both L-serine and D-serine. The sequence is that of Serine racemase from Oryza sativa subsp. indica (Rice).